We begin with the raw amino-acid sequence, 172 residues long: Adenine phosphoribosyltransferase (172 aa).

This sequence belongs to the purine/pyrimidine phosphoribosyltransferase family. As to quaternary structure, homodimer.

It localises to the cytoplasm. It carries out the reaction AMP + diphosphate = 5-phospho-alpha-D-ribose 1-diphosphate + adenine. It functions in the pathway purine metabolism; AMP biosynthesis via salvage pathway; AMP from adenine: step 1/1. Catalyzes a salvage reaction resulting in the formation of AMP, that is energically less costly than de novo synthesis. This chain is Adenine phosphoribosyltransferase, found in Trichormus variabilis (strain ATCC 29413 / PCC 7937) (Anabaena variabilis).